Consider the following 332-residue polypeptide: Glyceraldehyde-3-phosphate dehydrogenase 2 (332 aa).

NAD(+) contacts are provided by residues 11–12 (RI), aspartate 32, and arginine 77. Residues 148 to 150 (SCT), threonine 179, 208 to 209 (TG), and arginine 231 each bind D-glyceraldehyde 3-phosphate. Cysteine 149 acts as the Nucleophile in catalysis. Position 313 (asparagine 313) interacts with NAD(+).

It belongs to the glyceraldehyde-3-phosphate dehydrogenase family. Homotetramer.

It is found in the cytoplasm. The enzyme catalyses D-glyceraldehyde 3-phosphate + phosphate + NAD(+) = (2R)-3-phospho-glyceroyl phosphate + NADH + H(+). The protein operates within carbohydrate degradation; glycolysis; pyruvate from D-glyceraldehyde 3-phosphate: step 1/5. The chain is Glyceraldehyde-3-phosphate dehydrogenase 2 (Gapdh2) from Drosophila pseudoobscura pseudoobscura (Fruit fly).